The primary structure comprises 164 residues: ATP synthase subunit b (164 aa).

A helical membrane pass occupies residues 7–25 (SFWLAVSFIIFVYLIYRPA).

It belongs to the ATPase B chain family. In terms of assembly, F-type ATPases have 2 components, F(1) - the catalytic core - and F(0) - the membrane proton channel. F(1) has five subunits: alpha(3), beta(3), gamma(1), delta(1), epsilon(1). F(0) has three main subunits: a(1), b(2) and c(10-14). The alpha and beta chains form an alternating ring which encloses part of the gamma chain. F(1) is attached to F(0) by a central stalk formed by the gamma and epsilon chains, while a peripheral stalk is formed by the delta and b chains.

It localises to the cell inner membrane. Its function is as follows. F(1)F(0) ATP synthase produces ATP from ADP in the presence of a proton or sodium gradient. F-type ATPases consist of two structural domains, F(1) containing the extramembraneous catalytic core and F(0) containing the membrane proton channel, linked together by a central stalk and a peripheral stalk. During catalysis, ATP synthesis in the catalytic domain of F(1) is coupled via a rotary mechanism of the central stalk subunits to proton translocation. Component of the F(0) channel, it forms part of the peripheral stalk, linking F(1) to F(0). The sequence is that of ATP synthase subunit b from Rickettsia felis (strain ATCC VR-1525 / URRWXCal2) (Rickettsia azadi).